The primary structure comprises 620 residues: MALLQIAEPGMSTAPHQHRLAVGIDLGTTNSLVATVRNSIPEVLTDEEGRALLPSVVHYMKNGHAQIGYKALAAQNTDPKNTIASVKRFMGRGLKDIAYVENLPYDFLDTPGMVQLKTVAGVKSPVEISAEILATLRQQAEDALGDELVGAVITVPAYFDDAQRQATKDAAKLAGLNVLRLLNEPTAAAIAYGLDNGSEGVFAVYDLGGGTFDVSILKLTKGVFEVLSTGGDSALGGDDFDHRLLCWIIEQAKLSPLSDEDLSVLMVKSREAKELLSTKAETHIDAALGSGEEVHLTVTAADFVKMTQHLVAKTITPTKKALRDADLTVDDVDGVVMVGGATRMPHIRKAVGEFFQATPLANIDPDKVVALGAAVQANLLAGNRAAGDDWLLLDVIPLSLGIETMGGLVEKVIPRNSTIPCARAQEFTTFKDGQTAMAIHIVQGERELVSDCRSLARFELRGIPPMAAGAARIRVTYQVDADGLLSVSARELRSGVEASISVKPSYGLADDQIAQMLQDSFKSADVDMALRALREEQVEAERIVLATQSALDADGALLTDDERNAVTSLLAAVQQSSKGDDHHAIKAAVEALAQGTEEFAARRMDRSVRTALSGKKLDEI.

It belongs to the heat shock protein 70 family.

Chaperone involved in the maturation of iron-sulfur cluster-containing proteins. Has a low intrinsic ATPase activity which is markedly stimulated by HscB. This is Chaperone protein HscA homolog from Janthinobacterium sp. (strain Marseille) (Minibacterium massiliensis).